We begin with the raw amino-acid sequence, 225 residues long: C-reactive protein (225 aa).

A signal peptide spans 1 to 19 (MEKLLWCLLIMISFSRTFG). Residues 24 to 225 (FKKAFVFPKE…DVFIKPQLWS (202 aa)) enclose the Pentraxin (PTX) domain. A disulfide bond links cysteine 55 and cysteine 116. Positions 80, 157, 158, 159, and 169 each coordinate Ca(2+).

This sequence belongs to the pentraxin family. As to quaternary structure, homopentamer. Pentraxin (or pentaxin) have a discoid arrangement of 5 non-covalently bound subunits. Interacts with FCN1; may regulate monocyte activation by FCN1. Ca(2+) is required as a cofactor. As to expression, found in plasma.

The protein resides in the secreted. Displays several functions associated with host defense: it promotes agglutination, bacterial capsular swelling, phagocytosis and complement fixation through its calcium-dependent binding to phosphorylcholine. Can interact with DNA and histones and may scavenge nuclear material released from damaged circulating cells. This is C-reactive protein (Crp) from Mus musculus (Mouse).